Here is a 66-residue protein sequence, read N- to C-terminus: Clarkitoxin-I-Mdum (66 aa).

Cystine bridges form between C3–C24, C17–C42, C46–C59, and C60–C65.

As to expression, expressed by the venom gland.

The protein localises to the secreted. In terms of biological role, no toxicity is observed upon intravenous or intracerebroventricular injection into mice. Has no cytotoxic activity towards C2C12 cells at 100 ug/ml. This is Clarkitoxin-I-Mdum from Micrurus dumerilii (Coral snake).